The following is a 394-amino-acid chain: ATP phosphoribosyltransferase regulatory subunit (394 aa).

Belongs to the class-II aminoacyl-tRNA synthetase family. HisZ subfamily. As to quaternary structure, heteromultimer composed of HisG and HisZ subunits.

It localises to the cytoplasm. It functions in the pathway amino-acid biosynthesis; L-histidine biosynthesis; L-histidine from 5-phospho-alpha-D-ribose 1-diphosphate: step 1/9. Functionally, required for the first step of histidine biosynthesis. May allow the feedback regulation of ATP phosphoribosyltransferase activity by histidine. This chain is ATP phosphoribosyltransferase regulatory subunit, found in Geobacillus kaustophilus (strain HTA426).